Here is a 101-residue protein sequence, read N- to C-terminus: DNA-directed RNA polymerase subunit omega (101 aa).

Over residues 1 to 13 (MSSTPAAASATPS) the composition is skewed to low complexity. The interval 1–22 (MSSTPAAASATPSHGALPAYDT) is disordered.

The protein belongs to the RNA polymerase subunit omega family. As to quaternary structure, the RNAP catalytic core consists of 2 alpha, 1 beta, 1 beta' and 1 omega subunit. When a sigma factor is associated with the core the holoenzyme is formed, which can initiate transcription.

It catalyses the reaction RNA(n) + a ribonucleoside 5'-triphosphate = RNA(n+1) + diphosphate. Functionally, promotes RNA polymerase assembly. Latches the N- and C-terminal regions of the beta' subunit thereby facilitating its interaction with the beta and alpha subunits. This chain is DNA-directed RNA polymerase subunit omega, found in Rhodococcus jostii (strain RHA1).